A 295-amino-acid chain; its full sequence is Indole-3-glycerol phosphate synthase (295 aa).

It belongs to the TrpC family.

It carries out the reaction 1-(2-carboxyphenylamino)-1-deoxy-D-ribulose 5-phosphate + H(+) = (1S,2R)-1-C-(indol-3-yl)glycerol 3-phosphate + CO2 + H2O. Its pathway is amino-acid biosynthesis; L-tryptophan biosynthesis; L-tryptophan from chorismate: step 4/5. In Prochlorococcus marinus subsp. pastoris (strain CCMP1986 / NIES-2087 / MED4), this protein is Indole-3-glycerol phosphate synthase.